The primary structure comprises 447 residues: Argininosuccinate synthase (447 aa).

Residues 20–28 (AFSGGLDTS) and A46 each bind ATP. Y102 lines the L-citrulline pocket. Residues G132 and T134 each coordinate ATP. 3 residues coordinate L-aspartate: T134, N138, and D139. N138 contributes to the L-citrulline binding site. Residue D139 participates in ATP binding. L-citrulline is bound by residues R142 and S195. D197 contacts ATP. T204, E206, and E283 together coordinate L-citrulline.

It belongs to the argininosuccinate synthase family. Type 2 subfamily. As to quaternary structure, homotetramer.

The protein resides in the cytoplasm. It carries out the reaction L-citrulline + L-aspartate + ATP = 2-(N(omega)-L-arginino)succinate + AMP + diphosphate + H(+). It participates in amino-acid biosynthesis; L-arginine biosynthesis; L-arginine from L-ornithine and carbamoyl phosphate: step 2/3. This Neisseria meningitidis serogroup B (strain ATCC BAA-335 / MC58) protein is Argininosuccinate synthase (argG).